A 68-amino-acid polypeptide reads, in one-letter code: uncharacterized protein (68 aa).

This is an uncharacterized protein from Orgyia pseudotsugata (Douglas-fir tussock moth).